The following is a 290-amino-acid chain: 33 kDa chaperonin (290 aa).

Disulfide bonds link cysteine 235–cysteine 237 and cysteine 268–cysteine 271.

This sequence belongs to the HSP33 family. Post-translationally, under oxidizing conditions two disulfide bonds are formed involving the reactive cysteines. Under reducing conditions zinc is bound to the reactive cysteines and the protein is inactive.

It is found in the cytoplasm. Its function is as follows. Redox regulated molecular chaperone. Protects both thermally unfolding and oxidatively damaged proteins from irreversible aggregation. Plays an important role in the bacterial defense system toward oxidative stress. The polypeptide is 33 kDa chaperonin (Streptococcus pneumoniae serotype 19F (strain G54)).